We begin with the raw amino-acid sequence, 513 residues long: Glycerol-3-phosphate dehydrogenase (513 aa).

FAD is bound at residue 16-44; it reads DVAVIGGGINGVGIAADAAGRGLSVFLCE.

This sequence belongs to the FAD-dependent glycerol-3-phosphate dehydrogenase family. The cofactor is FAD.

Its subcellular location is the cytoplasm. The catalysed reaction is a quinone + sn-glycerol 3-phosphate = dihydroxyacetone phosphate + a quinol. The sequence is that of Glycerol-3-phosphate dehydrogenase (glpD) from Pseudomonas tolaasii.